A 335-amino-acid polypeptide reads, in one-letter code: Leukocyte immunoglobulin-like receptor subfamily B member 4A (335 aa).

The signal sequence occupies residues 1 to 23 (MIAMLTVLLYLGLILEPRTAVQA). The Extracellular segment spans residues 24–238 (GHLPKPIIWA…TEDGLETYQK (215 aa)). 2 Ig-like C2-type domains span residues 42 to 125 (YTSV…ENPS) and 124 to 212 (PSLS…KPSN). The cysteines at positions 49 and 98 are disulfide-linked. N-linked (GlcNAc...) asparagine glycans are attached at residues asparagine 133 and asparagine 191. Cysteine 144 and cysteine 196 are oxidised to a cystine. The helical transmembrane segment at 239–260 (ILIGVLVSFLLLFFLLLFLILI) threads the bilayer. Topologically, residues 261-335 (GYQYGHKKKA…CIRTQEQNNS (75 aa)) are cytoplasmic. Short sequence motifs (ITIM motif) lie at residues 298–303 (IVYAQV) and 320–325 (VTYAQL).

Interacts (when tyrosine phosphorylated) with SH2 domain-containing phosphatases PTPN6/SHP-1 and PTPN11/SHP-2; interaction with PTPN6 enhances inhibition of mast cell activation. In terms of processing, tyrosine phosphorylated. As to expression, expressed on mast cells and natural killer cells (at protein level). Expressed on neutrophils (at protein level). Expressed on eosinophils (at protein level). Expressed on dendritic cells (at protein level). Expressed on memory and marginal zone B cells (at protein level). Expressed on CD8 T cells (at protein level). Expressed in the uterus of pregnant mice where it is detected at day 4.0 of pregnancy with levels dropping at day 4.5. Highly expressed in the luminal epithelium of uterine endometrium with lower levels in the glandular epithelium.

It is found in the cell membrane. Functionally, inhibitory receptor involved in the down-regulation of the immune response. Receptor for FN1. Receptor for integrin ITGAV/ITGB3. Inhibits IgE-mediated mast cell activation, at least in part through interaction with ITGAV/ITGB3. Also inhibits KITLG/SCF-mediated mast cell activation. Through interaction with ITGAV/ITGB3, inhibits antibody production by memory and marginal zone B cells, probably by suppressing their differentiation into plasma cells. Inhibits IFNG production by CD8 T cells, CD4 T cells and natural killer cells. Inhibits antigen presentation by dendritic cells to T cells, preventing T cell activation. Inhibits lipopolysaccharide-mediated neutrophil-dependent vascular injury. Suppresses the allergic inflammatory response by inhibiting infiltration of neutrophils and eosinophils and preventing mast cell degranulation. Inhibits lysis by natural killer cells. The protein is Leukocyte immunoglobulin-like receptor subfamily B member 4A of Mus musculus (Mouse).